A 327-amino-acid chain; its full sequence is Immunodominant envelope protein p35 (327 aa).

The disordered stretch occupies residues 41 to 69; that stretch reads KNGYDDYRDPPSPKPLPKSKQEPNADDKV. Residues 59–69 show a composition bias toward basic and acidic residues; that stretch reads SKQEPNADDKV. The helical transmembrane segment at 291 to 311 threads the bilayer; the sequence is ITMMFLIAIVIIIGLAIFDIN.

The protein belongs to the poxviruses protein p35 family.

Its subcellular location is the virion membrane. In terms of biological role, envelope protein that binds to the cell surface to provide virion attachment to target cell. The protein is Immunodominant envelope protein p35 of Fowlpox virus (strain NVSL) (FPV).